A 556-amino-acid polypeptide reads, in one-letter code: ATP synthase subunit beta-2, mitochondrial (556 aa).

Positions 1–20 are enriched in low complexity; the sequence is MASRRVLSSLLRSSSGRSAA. The disordered stretch occupies residues 1–37; that stretch reads MASRRVLSSLLRSSSGRSAAKLVNRNPRLPSPSPARH. Residues 1–51 constitute a mitochondrion transit peptide; it reads MASRRVLSSLLRSSSGRSAAKLVNRNPRLPSPSPARHAAPCSYLLGRVAEY. A Phosphoserine modification is found at Ser59. 231–238 serves as a coordination point for ATP; the sequence is GGAGVGKT.

This sequence belongs to the ATPase alpha/beta chains family. As to quaternary structure, F-type ATPases have 2 components, CF(1) - the catalytic core - and CF(0) - the membrane proton channel. CF(1) has five subunits: alpha(3), beta(3), gamma(1), delta(1), epsilon(1). CF(0) has three main subunits: a, b and c.

Its subcellular location is the mitochondrion. The protein localises to the mitochondrion inner membrane. It carries out the reaction ATP + H2O + 4 H(+)(in) = ADP + phosphate + 5 H(+)(out). Functionally, mitochondrial membrane ATP synthase (F(1)F(0) ATP synthase or Complex V) produces ATP from ADP in the presence of a proton gradient across the membrane which is generated by electron transport complexes of the respiratory chain. F-type ATPases consist of two structural domains, F(1) - containing the extramembraneous catalytic core, and F(0) - containing the membrane proton channel, linked together by a central stalk and a peripheral stalk. During catalysis, ATP synthesis in the catalytic domain of F(1) is coupled via a rotary mechanism of the central stalk subunits to proton translocation. Subunits alpha and beta form the catalytic core in F(1). Rotation of the central stalk against the surrounding alpha(3)beta(3) subunits leads to hydrolysis of ATP in three separate catalytic sites on the beta subunits. The sequence is that of ATP synthase subunit beta-2, mitochondrial from Arabidopsis thaliana (Mouse-ear cress).